Here is a 360-residue protein sequence, read N- to C-terminus: Peptide chain release factor 1 (360 aa).

Gln-235 is modified (N5-methylglutamine). Over residues 285-295 the composition is skewed to basic and acidic residues; the sequence is RQAAEQADTRR. The disordered stretch occupies residues 285 to 309; it reads RQAAEQADTRRNLLGSGDRSDKIRT.

This sequence belongs to the prokaryotic/mitochondrial release factor family. Post-translationally, methylated by PrmC. Methylation increases the termination efficiency of RF1.

It localises to the cytoplasm. Its function is as follows. Peptide chain release factor 1 directs the termination of translation in response to the peptide chain termination codons UAG and UAA. In Actinobacillus pleuropneumoniae serotype 7 (strain AP76), this protein is Peptide chain release factor 1.